Reading from the N-terminus, the 316-residue chain is Olfactory receptor 1N2 (316 aa).

Residues methionine 1–proline 28 lie on the Extracellular side of the membrane. An N-linked (GlcNAc...) asparagine glycan is attached at asparagine 8. Residues leucine 29 to isoleucine 49 form a helical membrane-spanning segment. Topologically, residues leucine 50–threonine 60 are cytoplasmic. A helical membrane pass occupies residues proline 61–isoleucine 81. Residues proline 82–cysteine 100 are Extracellular-facing. Residues cysteine 100 and cysteine 182 are joined by a disulfide bond. A helical membrane pass occupies residues leucine 101 to methionine 121. Topologically, residues alanine 122–alanine 145 are cytoplasmic. Residues leucine 146 to leucine 166 form a helical membrane-spanning segment. The Extracellular portion of the chain corresponds to threonine 167 to glutamate 199. A helical transmembrane segment spans residues leucine 200 to serine 220. The Cytoplasmic segment spans residues tyrosine 221 to threonine 243. Residues cysteine 244–leucine 264 form a helical membrane-spanning segment. Residues proline 265–glutamate 274 are Extracellular-facing. Residues serine 275–leucine 295 form a helical membrane-spanning segment. Topologically, residues arginine 296–leucine 316 are cytoplasmic.

Belongs to the G-protein coupled receptor 1 family.

Its subcellular location is the membrane. Its function is as follows. Odorant receptor. In Homo sapiens (Human), this protein is Olfactory receptor 1N2 (OR1N2).